The sequence spans 255 residues: Leucyl/phenylalanyl-tRNA--protein transferase (255 aa).

This sequence belongs to the L/F-transferase family.

Its subcellular location is the cytoplasm. It carries out the reaction N-terminal L-lysyl-[protein] + L-leucyl-tRNA(Leu) = N-terminal L-leucyl-L-lysyl-[protein] + tRNA(Leu) + H(+). The catalysed reaction is N-terminal L-arginyl-[protein] + L-leucyl-tRNA(Leu) = N-terminal L-leucyl-L-arginyl-[protein] + tRNA(Leu) + H(+). It catalyses the reaction L-phenylalanyl-tRNA(Phe) + an N-terminal L-alpha-aminoacyl-[protein] = an N-terminal L-phenylalanyl-L-alpha-aminoacyl-[protein] + tRNA(Phe). Functionally, functions in the N-end rule pathway of protein degradation where it conjugates Leu, Phe and, less efficiently, Met from aminoacyl-tRNAs to the N-termini of proteins containing an N-terminal arginine or lysine. This Polaromonas sp. (strain JS666 / ATCC BAA-500) protein is Leucyl/phenylalanyl-tRNA--protein transferase.